Here is a 203-residue protein sequence, read N- to C-terminus: Outer-membrane lipoprotein carrier protein (203 aa).

An N-terminal signal peptide occupies residues 1 to 21; the sequence is MKKMAIACALLSSVVASSVWA. A disordered region spans residues 178–203; that stretch reads QQNGAVEPSKFTFTPPQGVTIDDQRK.

It belongs to the LolA family. In terms of assembly, monomer.

Its subcellular location is the periplasm. In terms of biological role, participates in the translocation of lipoproteins from the inner membrane to the outer membrane. Only forms a complex with a lipoprotein if the residue after the N-terminal Cys is not an aspartate (The Asp acts as a targeting signal to indicate that the lipoprotein should stay in the inner membrane). This chain is Outer-membrane lipoprotein carrier protein, found in Salmonella typhi.